A 1035-amino-acid polypeptide reads, in one-letter code: POM121-like protein 2 (1035 aa).

6 disordered regions span residues 1 to 37 (MGSF…PLHQ), 177 to 213 (LFPE…PRPG), 286 to 343 (IKKE…LGYA), 415 to 508 (LGPL…QSTL), 754 to 791 (SPLG…QPAL), and 972 to 1035 (NTPV…AYKK). Basic residues predominate over residues 27–37 (TKRRPPQPLHQ). A compositionally biased stretch (low complexity) spans 309–319 (GGSESSGQQNQ). Polar residues-rich tracts occupy residues 320–330 (KIPQLPSSPEN), 420–431 (SPQSTGEATSVA), and 445–462 (GCSQ…SKPT). Residues 464 to 481 (TFILLTPTSPTLPVTDTT) show a composition bias toward low complexity. Positions 493–502 (PMPPDPPAPP) are enriched in pro residues. Low complexity predominate over residues 1000-1016 (RGPFRSSASSFSIGAKS). The segment covering 1017–1035 (KTPKNREKGHSRRHHAYKK) has biased composition (basic residues).

The protein belongs to the POM121 family.

This Homo sapiens (Human) protein is POM121-like protein 2 (POM121L2).